A 661-amino-acid chain; its full sequence is Fusaric acid cluster transcription factor FUB12 (661 aa).

The segment at residues 17-48 (CVPCRTRKIKCNAAVVGLPCGSCVSRECPDDC) is a DNA-binding region (zn(2)-C6 fungal-type). Disordered regions lie at residues 57–131 (TVKV…RPPG) and 151–184 (SAAQTDASDHQSNDEPDDSFNSQIHHWNPPPQLD). Residues 73 to 98 (PDTNGSVLSPRQQQLPTNVSRQTTDS) are compositionally biased toward polar residues. The segment covering 99-109 (SHSDPVEESIH) has biased composition (basic and acidic residues). Residues 110-119 (ASHTGSSLRN) are compositionally biased toward polar residues. A compositionally biased stretch (basic and acidic residues) spans 120–129 (DTPHSRDRRP).

Its subcellular location is the nucleus. In terms of biological role, efflux pump involved in export of biosynthesis of fusaric acid, a mycotoxin with low to moderate toxicity to animals and humans, but with high phytotoxic properties. Constitutes a self-protecting mechanism of the fungus against critical levels of FSA within the cell. The protein is Fusaric acid cluster transcription factor FUB12 of Fusarium oxysporum f. sp. lycopersici (strain 4287 / CBS 123668 / FGSC 9935 / NRRL 34936) (Fusarium vascular wilt of tomato).